Consider the following 197-residue polypeptide: Protein-S-isoprenylcysteine O-methyltransferase B (197 aa).

3 helical membrane-spanning segments follow: residues 16–36 (MFLAIIFFHTSEYILAIAIHG), 52–72 (ALAMLISVLEYIAEIVFFPGL), and 81–101 (FGLTMIILGEILRKTAIITAG). Residues 116–119 (HKLV), Y124, and 129–132 (HPSY) contribute to the S-adenosyl-L-methionine site. Residues 140–160 (VGTQVMLCNPISAIAFAVVVW) traverse the membrane as a helical segment. Substrate is bound at residue R166. E170 contributes to the S-adenosyl-L-methionine binding site.

This sequence belongs to the class VI-like SAM-binding methyltransferase superfamily. Isoprenylcysteine carboxyl methyltransferase family. The cofactor is Zn(2+). As to expression, expressed in flowers, stems, leaves, roots and siliques. Detected in apices and vascular tissues of leaves and roots, in the stigma and in the filaments and anthers of stamen. Not found in petioles or hypocotyls.

It is found in the endoplasmic reticulum membrane. The catalysed reaction is [protein]-C-terminal S-[(2E,6E)-farnesyl]-L-cysteine + S-adenosyl-L-methionine = [protein]-C-terminal S-[(2E,6E)-farnesyl]-L-cysteine methyl ester + S-adenosyl-L-homocysteine. With respect to regulation, inhibited by farnesylthioacetic acid (FTAA) and N-acetyl-S-trans, trans-farnesyl-l-cysteine (AFC). Catalyzes the post-translational methylation of isoprenylated C-terminal cysteine residues, resulting in the modulation of the function of prenylated proteins. Involved in negative regulation of abscisic acid signaling. Carboxyl methylation is a reversible and potentially regulated step in the post-translational modification of prenylated proteins. The protein is Protein-S-isoprenylcysteine O-methyltransferase B of Arabidopsis thaliana (Mouse-ear cress).